Here is a 94-residue protein sequence, read N- to C-terminus: Integration host factor subunit beta (94 aa).

The protein belongs to the bacterial histone-like protein family. In terms of assembly, heterodimer of an alpha and a beta chain.

Its function is as follows. This protein is one of the two subunits of integration host factor, a specific DNA-binding protein that functions in genetic recombination as well as in transcriptional and translational control. The protein is Integration host factor subunit beta of Brucella melitensis biotype 2 (strain ATCC 23457).